The sequence spans 299 residues: Glycine--tRNA ligase alpha subunit (299 aa).

This sequence belongs to the class-II aminoacyl-tRNA synthetase family. Tetramer of two alpha and two beta subunits.

Its subcellular location is the cytoplasm. The enzyme catalyses tRNA(Gly) + glycine + ATP = glycyl-tRNA(Gly) + AMP + diphosphate. This Caulobacter vibrioides (strain ATCC 19089 / CIP 103742 / CB 15) (Caulobacter crescentus) protein is Glycine--tRNA ligase alpha subunit.